Here is a 594-residue protein sequence, read N- to C-terminus: Keratin, type II cytoskeletal 2 oral (594 aa).

The interval 1–164 is head; sequence MSRQACKKSF…DPQIGQVKAQ (164 aa). Arginine 85 and arginine 104 each carry omega-N-methylarginine. The coil 1A stretch occupies residues 165–200; the sequence is EREQIKTLNNKFASFIDKVRFLEQQNKVLETKWELL. The 316-residue stretch at 165–480 folds into the IF rod domain; the sequence is EREQIKTLNN…KLLEGEECRL (316 aa). A linker 1 region spans residues 201 to 221; the sequence is QQQTIRSGSGPQNLEPFFESY. The tract at residues 222-313 is coil 1B; that stretch reads ISCLRKQLDS…TLYDMELSQI (92 aa). The segment at 314–337 is linker 12; that stretch reads QSHVSDTSVVLSMDNNRCLDLDSI. Residues 338-476 are coil 2; the sequence is IAEVKAQYED…ATYRKLLEGE (139 aa). The interval 477-594 is tail; that stretch reads ECRLSGEFQN…TTSSSQQRSK (118 aa). A disordered region spans residues 497–594; it reads TSTSSSGSFR…TTSSSQQRSK (98 aa). Residues 506–522 show a composition bias toward gly residues; sequence RGTGGSNYGGDSSGRSG. Over residues 523 to 551 the composition is skewed to low complexity; the sequence is GSSSSSSRGSSSRGSSGSRLGSGGSISVS. The residue at position 541 (arginine 541) is an Omega-N-methylarginine. Residues 552-564 show a composition bias toward polar residues; sequence QQRMGFNSGGSQT. The segment covering 565 to 594 has biased composition (low complexity); the sequence is SVGSSYKSGRGGSSSVQFSQTTSSSQQRSK.

Belongs to the intermediate filament family. Heterotetramer of two type I and two type II keratins.

Probably contributes to terminal cornification. This chain is Keratin, type II cytoskeletal 2 oral, found in Mus musculus (Mouse).